A 300-amino-acid chain; its full sequence is uncharacterized protein (300 aa).

2 disordered regions span residues 167 to 186 (DVFL…HHEH) and 224 to 244 (ADGS…DASH). Polar residues predominate over residues 224–236 (ADGSSLETSSMSS).

This is an uncharacterized protein from Rattus norvegicus (Rat).